A 203-amino-acid polypeptide reads, in one-letter code: Small ribosomal subunit protein uS4 (203 aa).

The S4 RNA-binding domain maps to 93–156 (RRLDNVVYRL…MKVPAILEAV (64 aa)).

It belongs to the universal ribosomal protein uS4 family. Part of the 30S ribosomal subunit. Contacts protein S5. The interaction surface between S4 and S5 is involved in control of translational fidelity.

In terms of biological role, one of the primary rRNA binding proteins, it binds directly to 16S rRNA where it nucleates assembly of the body of the 30S subunit. Its function is as follows. With S5 and S12 plays an important role in translational accuracy. In Streptococcus pyogenes serotype M4 (strain MGAS10750), this protein is Small ribosomal subunit protein uS4.